The sequence spans 657 residues: Threonine--tRNA ligase (657 aa).

The region spanning Gln7–Thr70 is the TGS domain. The tract at residues Asp253–Pro555 is catalytic. Zn(2+) is bound by residues Cys351, His402, and His532.

Belongs to the class-II aminoacyl-tRNA synthetase family. Homodimer. Requires Zn(2+) as cofactor.

The protein localises to the cytoplasm. The enzyme catalyses tRNA(Thr) + L-threonine + ATP = L-threonyl-tRNA(Thr) + AMP + diphosphate + H(+). Its function is as follows. Catalyzes the attachment of threonine to tRNA(Thr) in a two-step reaction: L-threonine is first activated by ATP to form Thr-AMP and then transferred to the acceptor end of tRNA(Thr). Also edits incorrectly charged L-seryl-tRNA(Thr). In Chlorobium limicola (strain DSM 245 / NBRC 103803 / 6330), this protein is Threonine--tRNA ligase.